A 479-amino-acid polypeptide reads, in one-letter code: Putative F-box protein At1g67390 (479 aa).

The 49-residue stretch at 40–88 (DDRISKLPDDVLVMILASLSTEDALKTSVLSTRWKNVWKQVPYLHFDLL) folds into the F-box domain.

This chain is Putative F-box protein At1g67390, found in Arabidopsis thaliana (Mouse-ear cress).